The chain runs to 1466 residues: Helicase ARIP4 (1466 aa).

2 disordered regions span residues 1–137 (MSDE…ERRK) and 185–235 (DSSS…THVN). Acidic residues predominate over residues 11-49 (PDLDPDVELEDEEEEEEEEEVAVEEHDRDDEEGLLDDTS). A compositionally biased stretch (low complexity) spans 72–82 (TSTTSSQSEPS). The span at 99–114 (KKRAQKPSHMRRNIRK) shows a compositional bias: basic residues. Glycyl lysine isopeptide (Lys-Gly) (interchain with G-Cter in SUMO2) cross-links involve residues Lys114 and Lys126. Over residues 191-200 (EDEKSSRDEV) the composition is skewed to basic and acidic residues. Lys271 participates in a covalent cross-link: Glycyl lysine isopeptide (Lys-Gly) (interchain with G-Cter in SUMO2). One can recognise a Helicase ATP-binding domain in the interval 291–511 (RFKTSSGFGC…WCMVDFVRPD (221 aa)). Residue 304-311 (HSMGLGKT) participates in ATP binding. The short motif at 462-465 (DEGH) is the DEAH box element. The short motif at 550–554 (LHSLL) is the LXXLL motif 1 element. Residues 649-670 (SAGTSARCPPHGTKVKGEDSAL) form a disordered region. Glycyl lysine isopeptide (Lys-Gly) (interchain with G-Cter in SUMO2) cross-links involve residues Lys664, Lys681, Lys758, Lys900, Lys1013, and Lys1017. The region spanning 727–895 (HLIEESVKLG…RVVDDLNPML (169 aa)) is the Helicase C-terminal domain. Disordered regions lie at residues 1026 to 1045 (QSTP…GVSS) and 1120 to 1170 (ATGK…VSPD). Residues 1135–1154 (SGSQGPSLASTSNGRHSASS) are compositionally biased toward polar residues. Phosphoserine occurs at positions 1168 and 1171. 2 disordered regions span residues 1184–1212 (VAAA…MDNS) and 1259–1281 (TPSV…APVQ). Thr1259 bears the Phosphothreonine mark. Residues 1328 to 1332 (LSNLL) carry the LXXLL motif 2 motif. The disordered stretch occupies residues 1444-1466 (AEVGFSSNDDEDKDDDVIEVTGK). Over residues 1451–1466 (NDDEDKDDDVIEVTGK) the composition is skewed to acidic residues.

This sequence belongs to the SNF2/RAD54 helicase family. Interacts with AR via its N-terminus. Interacts with DYRK1A. Binds DNA and mononucleosomes, but does not seem to form large multiprotein complexes. In terms of processing, sumoylated. In terms of tissue distribution, expressed at relatively low level, with highest expression in testis, liver and kidney. In brain, it is expressed in hippocampal and cerebellar neurons. In testis, it is present at high level in Sertoli cell nuclei. Also present in Leydig cell (at protein level).

It is found in the nucleus. It catalyses the reaction ATP + H2O = ADP + phosphate + H(+). Enzyme activity is enhanced by dsDNA (double-stranded DNA) and ssDNA (single-stranded DNA). In terms of biological role, DNA helicase that modulates androgen receptor (AR)-dependent transactivation in a promoter-dependent manner. Not able to remodel mononucleosomes in vitro. Acts as an AR-coregulator in Sertoli cells. The sequence is that of Helicase ARIP4 (Rad54l2) from Mus musculus (Mouse).